The primary structure comprises 224 residues: UPF0441 protein PC1_0312 (224 aa).

The disordered stretch occupies residues 178 to 224 (PKTALAPKPATTSTITRGGFGETVAKQNSMQRSSASSSSSSSRSMGG). Positions 209-224 (RSSASSSSSSSRSMGG) are enriched in low complexity.

This sequence belongs to the UPF0441 family.

The sequence is that of UPF0441 protein PC1_0312 from Pectobacterium carotovorum subsp. carotovorum (strain PC1).